The following is a 459-amino-acid chain: tRNA modification GTPase MnmE (459 aa).

(6S)-5-formyl-5,6,7,8-tetrahydrofolate-binding residues include R22, E85, and R124. The 160-residue stretch at 221–380 (GLSTVIVGKP…LEIQIRDLFF (160 aa)) folds into the TrmE-type G domain. N231 provides a ligand contact to K(+). GTP contacts are provided by residues 231 to 236 (NVGKSS), 250 to 256 (TEVAGTT), and 275 to 278 (DTAG). S235 provides a ligand contact to Mg(2+). Residues T250, V252, and T255 each coordinate K(+). T256 contributes to the Mg(2+) binding site. A (6S)-5-formyl-5,6,7,8-tetrahydrofolate-binding site is contributed by K459.

Belongs to the TRAFAC class TrmE-Era-EngA-EngB-Septin-like GTPase superfamily. TrmE GTPase family. In terms of assembly, homodimer. Heterotetramer of two MnmE and two MnmG subunits. The cofactor is K(+).

The protein localises to the cytoplasm. Exhibits a very high intrinsic GTPase hydrolysis rate. Involved in the addition of a carboxymethylaminomethyl (cmnm) group at the wobble position (U34) of certain tRNAs, forming tRNA-cmnm(5)s(2)U34. The polypeptide is tRNA modification GTPase MnmE (Staphylococcus aureus (strain MSSA476)).